A 198-amino-acid polypeptide reads, in one-letter code: Carnitine operon protein CaiE (198 aa).

Positions 179 to 198 (VEENRPRLKGTTDVKPKSAQ) are disordered. A compositionally biased stretch (basic and acidic residues) spans 180–198 (EENRPRLKGTTDVKPKSAQ).

This sequence belongs to the transferase hexapeptide repeat family.

It participates in amine and polyamine metabolism; carnitine metabolism. Functionally, overproduction of CaiE stimulates the activity of CaiB and CaiD. This is Carnitine operon protein CaiE from Salmonella choleraesuis (strain SC-B67).